Reading from the N-terminus, the 243-residue chain is Small ribosomal subunit protein uS3 (243 aa).

Residues 39–107 (MRKFVMSELK…ETHLNIVEVR (69 aa)) form the KH type-2 domain. The tract at residues 214 to 243 (ASERRAMEGDAQGPASRDRDRDRDRRRDNA) is disordered. Basic and acidic residues predominate over residues 229 to 243 (SRDRDRDRDRRRDNA).

This sequence belongs to the universal ribosomal protein uS3 family. In terms of assembly, part of the 30S ribosomal subunit. Forms a tight complex with proteins S10 and S14.

Binds the lower part of the 30S subunit head. Binds mRNA in the 70S ribosome, positioning it for translation. The sequence is that of Small ribosomal subunit protein uS3 from Rhizobium johnstonii (strain DSM 114642 / LMG 32736 / 3841) (Rhizobium leguminosarum bv. viciae).